Here is a 282-residue protein sequence, read N- to C-terminus: MTDRYAVFGNPISHSKSPFIHGQFAAPTQESLTYEAILAPVDGFEASLTAFFNAGGKGANVTVPFKEQAFALCDSISPEAKLAGAVNTLSLLADGTIRGDNTDGLGLVADLIANLGSLQDQRVLLIGAGGAARGCILPLLNAEIAQLTISNRTHTKAQLLVDIFTSVDNGAYASKVTAVEMSELAGEFDIIINSTSASLAGELPPLPAHIITTQTVCYDMMYGASITAFNQWALSQGAAKVIDGLGMLVGQAAKSFTLWRGIEPDTQVVLTLLRDKLMAEPK.

Shikimate-binding positions include 15 to 17 (SKS) and T62. K66 functions as the Proton acceptor in the catalytic mechanism. Shikimate contacts are provided by N87 and D103. Residues 127–131 (GAGGA), 151–156 (NRTHTK), and M220 each bind NADP(+). Y222 contacts shikimate. G244 provides a ligand contact to NADP(+).

Belongs to the shikimate dehydrogenase family. Homodimer.

It carries out the reaction shikimate + NADP(+) = 3-dehydroshikimate + NADPH + H(+). It participates in metabolic intermediate biosynthesis; chorismate biosynthesis; chorismate from D-erythrose 4-phosphate and phosphoenolpyruvate: step 4/7. In terms of biological role, involved in the biosynthesis of the chorismate, which leads to the biosynthesis of aromatic amino acids. Catalyzes the reversible NADPH linked reduction of 3-dehydroshikimate (DHSA) to yield shikimate (SA). The sequence is that of Shikimate dehydrogenase (NADP(+)) from Shewanella baltica (strain OS223).